The following is a 430-amino-acid chain: Glutamyl-tRNA reductase (430 aa).

Residues 49–52, serine 109, 114–116, and glutamine 120 contribute to the substrate site; these read TCNR and EGQ. Catalysis depends on cysteine 50, which acts as the Nucleophile. 189–194 contributes to the NADP(+) binding site; sequence GAGKMA.

Belongs to the glutamyl-tRNA reductase family. As to quaternary structure, homodimer.

The catalysed reaction is (S)-4-amino-5-oxopentanoate + tRNA(Glu) + NADP(+) = L-glutamyl-tRNA(Glu) + NADPH + H(+). It participates in porphyrin-containing compound metabolism; protoporphyrin-IX biosynthesis; 5-aminolevulinate from L-glutamyl-tRNA(Glu): step 1/2. Its pathway is porphyrin-containing compound metabolism; chlorophyll biosynthesis. In terms of biological role, catalyzes the NADPH-dependent reduction of glutamyl-tRNA(Glu) to glutamate 1-semialdehyde (GSA). This is Glutamyl-tRNA reductase from Crocosphaera subtropica (strain ATCC 51142 / BH68) (Cyanothece sp. (strain ATCC 51142)).